Here is a 427-residue protein sequence, read N- to C-terminus: MSAIVDIIGREILDSRGNPTVECDVLLESGTMGRAAVPSGASTGSREAIELRDGEAGRYNGKGVLKAVEHINTEISEAIMGLDASEQAFLDKTLLELDGTDNKSRLGANAMLAVSMAVAKAAAEEAGLPLYRYFGGSGAMQLPVPMMNIVNGGAHANNSLDIQEFMIVPVSQPTFREALRCGAEVFHALKKILSDRGMSTAVGDEGGFAPNFGSNDECLSTILQAIEKAGYRAGEDVLLALDCAASEFYHDGKYQLAGEGLQLSSAEFTDYLATLADKFPIVSIEDGMHESDWEGWKLLTERLGKKVQLVGDDLFVTNTRILKEGIEKGIANSILIKINQIGTLTETFAAIEMAKRAGYTAVISHRSGETEDSTIADIAVGLNAGQIKTGSLSRSDRISKYNQLLRIEEDLGDIASYPGKSAFYNLR.

Q163 contributes to the (2R)-2-phosphoglycerate binding site. E205 acts as the Proton donor in catalysis. Mg(2+) is bound by residues D242, E285, and D312. (2R)-2-phosphoglycerate contacts are provided by K337, R366, S367, and K388. Residue K337 is the Proton acceptor of the active site.

This sequence belongs to the enolase family. It depends on Mg(2+) as a cofactor.

Its subcellular location is the cytoplasm. The protein localises to the secreted. It localises to the cell surface. The enzyme catalyses (2R)-2-phosphoglycerate = phosphoenolpyruvate + H2O. It participates in carbohydrate degradation; glycolysis; pyruvate from D-glyceraldehyde 3-phosphate: step 4/5. Functionally, catalyzes the reversible conversion of 2-phosphoglycerate (2-PG) into phosphoenolpyruvate (PEP). It is essential for the degradation of carbohydrates via glycolysis. This chain is Enolase, found in Burkholderia ambifaria (strain MC40-6).